A 582-amino-acid polypeptide reads, in one-letter code: ATP-dependent lipid A-core flippase (582 aa).

6 consecutive transmembrane segments (helical) span residues 27 to 48 (LVVSTIALVINAAADTYMISLL), 63 to 85 (FLRILPFMILGLMFVRGLSGFAS), 144 to 168 (VSIVREGASIIGLLTLMFWNSWQLS), 170 to 188 (VLIVVAPVVAFAISFVSKR), 244 to 266 (LVSAQSIADPVIQMIASLALFAV), and 283 to 302 (TFTVVFSAMFGLMRPLKALT). The region spanning 28 to 310 (VVSTIALVIN…LTSVTSEFQR (283 aa)) is the ABC transmembrane type-1 domain. One can recognise an ABC transporter domain in the interval 342–578 (VDVKDVTFTY…DGAYAQLHRI (237 aa)). ATP is bound at residue 376–383 (GRSGSGKS).

It belongs to the ABC transporter superfamily. Lipid exporter (TC 3.A.1.106) family. In terms of assembly, homodimer.

Its subcellular location is the cell inner membrane. It carries out the reaction ATP + H2O + lipid A-core oligosaccharideSide 1 = ADP + phosphate + lipid A-core oligosaccharideSide 2.. In terms of biological role, involved in lipopolysaccharide (LPS) biosynthesis. Translocates lipid A-core from the inner to the outer leaflet of the inner membrane. Transmembrane domains (TMD) form a pore in the inner membrane and the ATP-binding domain (NBD) is responsible for energy generation. Shows ATPase activity. This is ATP-dependent lipid A-core flippase from Vibrio cholerae serotype O1 (strain ATCC 39315 / El Tor Inaba N16961).